The sequence spans 118 residues: Small ribosomal subunit protein uS13 (118 aa).

Residues 94 to 118 are disordered; the sequence is GLPVRGQRTKTNARTRKGPRKPIKK.

The protein belongs to the universal ribosomal protein uS13 family. As to quaternary structure, part of the 30S ribosomal subunit. Forms a loose heterodimer with protein S19. Forms two bridges to the 50S subunit in the 70S ribosome.

In terms of biological role, located at the top of the head of the 30S subunit, it contacts several helices of the 16S rRNA. In the 70S ribosome it contacts the 23S rRNA (bridge B1a) and protein L5 of the 50S subunit (bridge B1b), connecting the 2 subunits; these bridges are implicated in subunit movement. Contacts the tRNAs in the A and P-sites. This chain is Small ribosomal subunit protein uS13, found in Histophilus somni (strain 129Pt) (Haemophilus somnus).